The following is a 289-amino-acid chain: Serine/threonine-protein phosphatase Pgam5, mitochondrial (289 aa).

The chain crosses the membrane as a helical span at residues 7 to 23 (FVCGTGAGLAAYYLQRL).

It belongs to the phosphoglycerate mutase family. BPG-dependent PGAM subfamily. As to quaternary structure, interacts with Pk92B/ASK1.

It is found in the mitochondrion outer membrane. It catalyses the reaction O-phospho-L-seryl-[protein] + H2O = L-seryl-[protein] + phosphate. The catalysed reaction is O-phospho-L-threonyl-[protein] + H2O = L-threonyl-[protein] + phosphate. Functionally, displays phosphatase activity for serine/threonine residues, and dephosphorylates and activates Pk92B kinase. Has apparently no phosphoglycerate mutase activity. The chain is Serine/threonine-protein phosphatase Pgam5, mitochondrial (Pgam5) from Drosophila melanogaster (Fruit fly).